The sequence spans 540 residues: Decreased expression in renal and prostate cancer protein (540 aa).

Positions 1-12 (MKEPRIFPRERP) are enriched in basic and acidic residues. Disordered regions lie at residues 1 to 264 (MKEP…DARA) and 304 to 389 (SQAS…AFSQ). 2 stretches are compositionally biased toward low complexity: residues 113 to 125 (PRPG…SPGS) and 180 to 192 (GPSL…LTPG). Polar residues predominate over residues 304-316 (SQASGNMGTSPSS). At S313 the chain carries Phosphoserine. The segment covering 321 to 330 (PGPIGPNSGP) has biased composition (low complexity). Residue R375 is modified to Asymmetric dimethylarginine. R403 carries the post-translational modification Omega-N-methylarginine. The residue at position 439 (S439) is a Phosphoserine. A disordered region spans residues 516–540 (GTNPAAFPRPGGPMAAMYPNGMLPP).

This sequence belongs to the DERPC family.

It is found in the nucleus. Potential tumor suppressor. The sequence is that of Decreased expression in renal and prostate cancer protein from Bos taurus (Bovine).